Here is a 122-residue protein sequence, read N- to C-terminus: Small ribosomal subunit protein uS13 (122 aa).

Residues 97–122 are disordered; that stretch reads PVRGQRTHTNARTRKGPARAIAGKKK.

It belongs to the universal ribosomal protein uS13 family. In terms of assembly, part of the 30S ribosomal subunit. Forms a loose heterodimer with protein S19. Forms two bridges to the 50S subunit in the 70S ribosome.

In terms of biological role, located at the top of the head of the 30S subunit, it contacts several helices of the 16S rRNA. In the 70S ribosome it contacts the 23S rRNA (bridge B1a) and protein L5 of the 50S subunit (bridge B1b), connecting the 2 subunits; these bridges are implicated in subunit movement. Contacts the tRNAs in the A and P-sites. This chain is Small ribosomal subunit protein uS13, found in Bartonella bacilliformis (strain ATCC 35685 / KC583 / Herrer 020/F12,63).